A 324-amino-acid chain; its full sequence is uncharacterized protein (324 aa).

This is an uncharacterized protein from Dryophytes versicolor (chameleon treefrog).